The primary structure comprises 545 residues: Lysine--tRNA ligase (545 aa).

Positions 41-49 match the 'HIGH' region motif; sequence PSGVPHLGH. A 'KMSKS' region motif is present at residues 306–310; the sequence is ALSSS.

This sequence belongs to the class-I aminoacyl-tRNA synthetase family.

It is found in the cytoplasm. It catalyses the reaction tRNA(Lys) + L-lysine + ATP = L-lysyl-tRNA(Lys) + AMP + diphosphate. This chain is Lysine--tRNA ligase, found in Natronomonas pharaonis (strain ATCC 35678 / DSM 2160 / CIP 103997 / JCM 8858 / NBRC 14720 / NCIMB 2260 / Gabara) (Halobacterium pharaonis).